Reading from the N-terminus, the 425-residue chain is Nuclear pore complex-interacting protein family member B6 (425 aa).

Positions 332-414 (SPLPPSVDDN…RRLSKLRTRH (83 aa)) are disordered. A compositionally biased stretch (basic and acidic residues) spans 353–395 (EVEKPPKPKRWRVDEVEQSPKPKRRRVDEVEQSPKPKRQREAE). Residues 401-414 (KPKRRRLSKLRTRH) are compositionally biased toward basic residues.

It belongs to the NPIP family.

This chain is Nuclear pore complex-interacting protein family member B6 (NPIPB6), found in Homo sapiens (Human).